Consider the following 300-residue polypeptide: Porphobilinogen deaminase (300 aa).

An S-(dipyrrolylmethanemethyl)cysteine modification is found at Cys-239.

This sequence belongs to the HMBS family. In terms of assembly, monomer. Requires dipyrromethane as cofactor.

It catalyses the reaction 4 porphobilinogen + H2O = hydroxymethylbilane + 4 NH4(+). The protein operates within porphyrin-containing compound metabolism; protoporphyrin-IX biosynthesis; coproporphyrinogen-III from 5-aminolevulinate: step 2/4. Tetrapolymerization of the monopyrrole PBG into the hydroxymethylbilane pre-uroporphyrinogen in several discrete steps. In Francisella philomiragia subsp. philomiragia (strain ATCC 25017 / CCUG 19701 / FSC 153 / O#319-036), this protein is Porphobilinogen deaminase.